Reading from the N-terminus, the 358-residue chain is Serine/threonine-protein phosphatase 2A activator (358 aa).

A disordered region spans residues 1 to 20 (MAEGERQPPPDSSEEAPPAT). Alanine 2 carries the post-translational modification N-acetylalanine. Residues arginine 183, threonine 188, and glycine 189 each contribute to the ATP site. Glycine 243 and aspartate 249 together coordinate Mg(2+). ATP is bound by residues proline 339, glutamine 342, and histidine 343.

It belongs to the PTPA-type PPIase family. As to quaternary structure, associates with PP2A heterodimeric core enzyme PP2A(D), composed of a 36 kDa catalytic subunit (subunit C) and a 65 kDa constant regulatory subunit (PR65 or subunit A). Interacts with the catalytic subunit PPP2CA (via C-terminus). Interacts with PPP2CB. In terms of tissue distribution, widely expressed.

It is found in the cytoplasm. The protein resides in the nucleus. The catalysed reaction is [protein]-peptidylproline (omega=180) = [protein]-peptidylproline (omega=0). Functionally, PPIases accelerate the folding of proteins. It catalyzes the cis-trans isomerization of proline imidic peptide bonds in oligopeptides. Acts as a regulatory subunit for serine/threonine-protein phosphatase 2A (PP2A). Modulates PP2A activity or substrate specificity, probably by inducing a conformational change in the catalytic subunit, a proposed direct target of the PPIase. Can reactivate inactive phosphatase PP2A-phosphatase methylesterase complexes (PP2A(i)) in presence of ATP and Mg(2+). Reversibly stimulates the variable phosphotyrosyl phosphatase activity of PP2A core heterodimer PP2A(D) in presence of ATP and Mg(2+) (in vitro). The phosphotyrosyl phosphatase activity is dependent of an ATPase activity of the PP2A(D):PPP2R4 complex. Is involved in apoptosis; the function appears to be independent from PP2A. The polypeptide is Serine/threonine-protein phosphatase 2A activator (Homo sapiens (Human)).